The primary structure comprises 199 residues: Thioredoxin peroxidase (199 aa).

Positions 6–165 constitute a Thioredoxin domain; it reads AKLNHPAPHF…TLRLVKAFQF (160 aa). The active-site Cysteine sulfenic acid (-SOH) intermediate is cysteine 52. Residues 179–199 are disordered; sequence PGSKTMKADPNGSQDYFSSMN. Residues 189-199 show a composition bias toward polar residues; sequence NGSQDYFSSMN.

This sequence belongs to the peroxiredoxin family. AhpC/Prx1 subfamily. Homodimer; disulfide-linked, upon oxidation.

It catalyses the reaction a hydroperoxide + [thioredoxin]-dithiol = an alcohol + [thioredoxin]-disulfide + H2O. Functionally, thiol-specific peroxidase that catalyzes the reduction of hydrogen peroxide and organic hydroperoxides to water and alcohols, respectively. Plays a role in cell protection against oxidative stress by detoxifying peroxides and as sensor of hydrogen peroxide-mediated signaling events. The chain is Thioredoxin peroxidase from Trypanosoma brucei rhodesiense.